The primary structure comprises 236 residues: MTSEKGPSTGDPTLRRRIESWEFDVFYDPRELRKETCLLYEIKWGMSRKIWRSSGKNTTNHVEVNFIKKFTSERRFHSSISCSITWFLSWSPCWECSQAIREFLSQHPGVTLVIYVARLFWHMDQRNRQGLRDLVNSGVTIQIMRASEYYHCWRNFVNYPPGDEAHWPQYPPLWMMLYALELHCIILSLPPCLKISRRWQNHLAFFRLHLQNCHYQTIPPHILLATGLIHPSVTWR.

The CMP/dCMP-type deaminase domain occupies 10 to 134 (GDPTLRRRIE…QRNRQGLRDL (125 aa)). Zn(2+) is bound at residue histidine 61. Residue glutamate 63 is the Proton donor of the active site. 2 residues coordinate Zn(2+): cysteine 93 and cysteine 96.

Belongs to the cytidine and deoxycytidylate deaminase family. In terms of assembly, homodimer. Interacts with A1CF; form an mRNA editing complex. Interacts with RBM47; form an mRNA editing complex. Found in a complex with CELF2/CUGBP2 and A1CF. Interacts with HNRPAB. Interacts with SYNCRIP. It depends on Zn(2+) as a cofactor.

The protein resides in the cytoplasm. The protein localises to the nucleus. It carries out the reaction a cytidine in mRNA + H2O + H(+) = a uridine in mRNA + NH4(+). The catalysed reaction is cytidine(6666) in apoB mRNA + H2O + H(+) = uridine(6666) in apoB mRNA + NH4(+). In terms of biological role, cytidine deaminase catalyzing the cytidine to uridine postranscriptional editing of a variety of mRNAs. Form complexes with cofactors that confer differential editing activity and selectivity. Responsible for the postranscriptional editing of a CAA codon for Gln to a UAA codon for stop in the apolipoprotein B mRNA. Also involved in CGA (Arg) to UGA (Stop) editing in the NF1 mRNA. May also play a role in the epigenetic regulation of gene expression by participating in DNA demethylation. In Pongo pygmaeus (Bornean orangutan), this protein is C-&gt;U-editing enzyme APOBEC-1.